The following is a 1068-amino-acid chain: Focal adhesion kinase 1 (1068 aa).

The disordered stretch occupies residues methionine 1–methionine 26. Residues leucine 10–serine 23 are compositionally biased toward polar residues. An FERM domain is found at arginine 35–serine 355. Phosphotyrosine occurs at positions 403 and 413. Residues isoleucine 435–leucine 693 form the Protein kinase domain. ATP-binding positions include isoleucine 441–glycine 447, lysine 467, and glutamate 513–cysteine 515. Catalysis depends on aspartate 559, which acts as the Proton acceptor. Phosphotyrosine; by autocatalysis is present on residues tyrosine 589 and tyrosine 590. The segment covering glutamine 699 to arginine 710 has biased composition (basic and acidic residues). 2 disordered regions span residues glutamine 699 to methionine 750 and glycine 869 to asparagine 912. A phosphotyrosine mark is found at tyrosine 874 and tyrosine 941.

It belongs to the protein kinase superfamily. Tyr protein kinase family. FAK subfamily. Phosphorylated on tyrosine residues; phosphorylated kinase is first detected during gastrulation, suggesting that tyrosine phosphorylation is developmentally regulated.

It is found in the cell junction. The protein localises to the focal adhesion. Its subcellular location is the cell membrane. The protein resides in the cytoplasm. It localises to the cytoskeleton. It is found in the cilium basal body. The catalysed reaction is L-tyrosyl-[protein] + ATP = O-phospho-L-tyrosyl-[protein] + ADP + H(+). Its function is as follows. Non-receptor protein-tyrosine kinase implicated in signaling pathways involved in cell motility, proliferation and apoptosis. Activated by tyrosine-phosphorylation in response to either integrin clustering induced by cell adhesion or antibody cross-linking, or via G-protein coupled receptor (GPCR) occupancy by ligands such as bombesin or lysophosphatidic acid, or via LDL receptor occupancy. Microtubule-induced dephosphorylation at Tyr-397 is crucial for the induction of focal adhesion disassembly. This chain is Focal adhesion kinase 1 (ptk2), found in Xenopus laevis (African clawed frog).